The primary structure comprises 494 residues: GlcNAc-binding protein A (494 aa).

The first 21 residues, 1 to 21 (MKLNKIMLAMVVMSISGTAMA), serve as a signal peptide directing secretion. Positions 22–192 (HGYIENPPSR…TFYNMIDAEF (171 aa)) constitute a Chitin-binding type-4 domain. The 50-residue stretch at 435 to 484 (APAWSNKSSYQAKDTVTHNGRIYMSKWWADKASVPGDAAVTDTTGNGSGW) folds into the Chitin-binding type-3 domain. Residues 474 to 494 (VTDTTGNGSGWGKVWEDKGAC) are disordered.

This sequence belongs to the GbpA family.

The protein localises to the secreted. In terms of biological role, probably interacts with GlcNAc residues. May promote attachment to both epithelial cell surfaces and chitin. The polypeptide is GlcNAc-binding protein A (Yersinia enterocolitica serotype O:8 / biotype 1B (strain NCTC 13174 / 8081)).